We begin with the raw amino-acid sequence, 308 residues long: Putative mitochondrial transporter UCP3 (308 aa).

Over 1–10 (MVGLKPPEVP) the chain is Mitochondrial intermembrane. Residues 11-32 (PTTAVKLLGAGTAACFADLLTF) form a helical membrane-spanning segment. 3 Solcar repeats span residues 11-102 (PTTA…VKQL), 111-202 (SSIT…IKEK), and 211-296 (DNLP…LKRA). Topologically, residues 33–73 (PLDTAKVRLQIQGENQAARSAQYRGVLGTILTMVRNEGPRS) are mitochondrial matrix. A helical membrane pass occupies residues 74–96 (PYNGLVAGLQRQMSFASIRIGLY). Over 97–116 (DSVKQLYTPKGSDHSSITTR) the chain is Mitochondrial intermembrane. The chain crosses the membrane as a helical span at residues 117–133 (ILAGCTTGAMAVTCAQP). Residues 134–179 (TDVVKVRFQASIHAGPRSNRKYSGTMDAYRTIAREEGVRGLWKGIL) are Mitochondrial matrix-facing. A helical transmembrane segment spans residues 180-196 (PNITRNAIVNCAEMVTY). The Mitochondrial intermembrane segment spans residues 197–213 (DVIKEKVLDYHLLTDNL). A helical transmembrane segment spans residues 214 to 233 (PCHFVSAFGAGFCATVVASP). The Mitochondrial matrix segment spans residues 234 to 267 (VDVVKTRYMNSPPGQYQNPLDCMLKMVTQEGPTA). The helical transmembrane segment at 268-290 (FYKGFTPSFLRLGSWNVVMFVSY) threads the bilayer. Residues 275–297 (SFLRLGSWNVVMFVSYEQLKRAL) are purine nucleotide binding. At 291–308 (EQLKRALMKVQMLRESPF) the chain is on the mitochondrial intermembrane side.

The protein belongs to the mitochondrial carrier (TC 2.A.29) family. Interacts with HAX1; the interaction is direct and calcium-dependent.

The protein localises to the mitochondrion inner membrane. In terms of biological role, putative transmembrane transporter that plays a role in mitochondrial metabolism via an as yet unclear mechanism. Originally, this mitochondrial protein was thought to act as a proton transmembrane transporter from the mitochondrial intermembrane space into the matrix, causing proton leaks through the inner mitochondrial membrane, thereby uncoupling mitochondrial membrane potential generation from ATP synthesis. However, this function is controversial and uncoupling may not be the function, or at least not the main function, but rather a consequence of more conventional metabolite transporter activity. The protein is Putative mitochondrial transporter UCP3 of Sus scrofa (Pig).